Reading from the N-terminus, the 376-residue chain is Methionine import ATP-binding protein MetN 1 (376 aa).

The 240-residue stretch at 34 to 273 (VRFINLGKTY…PQHEVSKTLL (240 aa)) folds into the ABC transporter domain. 70 to 77 (GRSGAGKS) contacts ATP.

This sequence belongs to the ABC transporter superfamily. Methionine importer (TC 3.A.1.24) family. In terms of assembly, the complex is composed of two ATP-binding proteins (MetN), two transmembrane proteins (MetI) and a solute-binding protein (MetQ).

Its subcellular location is the cell inner membrane. It catalyses the reaction L-methionine(out) + ATP + H2O = L-methionine(in) + ADP + phosphate + H(+). The catalysed reaction is D-methionine(out) + ATP + H2O = D-methionine(in) + ADP + phosphate + H(+). Functionally, part of the ABC transporter complex MetNIQ involved in methionine import. Responsible for energy coupling to the transport system. This Pseudomonas syringae pv. tomato (strain ATCC BAA-871 / DC3000) protein is Methionine import ATP-binding protein MetN 1.